Consider the following 236-residue polypeptide: Endonuclease NucS (236 aa).

This sequence belongs to the NucS endonuclease family.

The protein localises to the cytoplasm. Its function is as follows. Cleaves both 3' and 5' ssDNA extremities of branched DNA structures. The sequence is that of Endonuclease NucS from Saccharolobus solfataricus (strain ATCC 35092 / DSM 1617 / JCM 11322 / P2) (Sulfolobus solfataricus).